The chain runs to 116 residues: Large ribosomal subunit protein uL18 (116 aa).

Belongs to the universal ribosomal protein uL18 family. In terms of assembly, part of the 50S ribosomal subunit; part of the 5S rRNA/L5/L18/L25 subcomplex. Contacts the 5S and 23S rRNAs.

Functionally, this is one of the proteins that bind and probably mediate the attachment of the 5S RNA into the large ribosomal subunit, where it forms part of the central protuberance. In Acinetobacter baylyi (strain ATCC 33305 / BD413 / ADP1), this protein is Large ribosomal subunit protein uL18.